Consider the following 321-residue polypeptide: Putative zinc finger CCCH domain-containing protein 9 (321 aa).

Disordered regions lie at residues 1 to 59 and 181 to 269; these read MADA…PGKK and REAE…NLQE. The span at 10 to 29 shows a compositional bias: basic and acidic residues; it reads EAERRSDETESRSIKEPKEK. The segment at 55–83 adopts a C3H1-type zinc-finger fold; it reads RPGKKDCQFYLKNGLCRYRSSCRFNHPTQ. Residues 164–290 adopt a coiled-coil conformation; it reads TEWRFERERM…EARLRLEQIR (127 aa). Composition is skewed to basic and acidic residues over residues 181–224 and 231–244; these read REAE…REAQ and RQRDSIERQRREAQ.

The chain is Putative zinc finger CCCH domain-containing protein 9 from Arabidopsis thaliana (Mouse-ear cress).